The primary structure comprises 79 residues: Short neurotoxin 3 (79 aa).

Residues 1–23 (MKTLLLTLVVMTIVCLDLGYTLT) form the signal peptide. Cystine bridges form between C24-C41, C34-C59, C63-C71, and C72-C77.

It belongs to the three-finger toxin family. Short-chain subfamily. Expressed by the venom gland.

It is found in the secreted. The polypeptide is Short neurotoxin 3 (Oxyuranus scutellatus scutellatus (Australian taipan)).